The chain runs to 408 residues: Argininosuccinate synthase (408 aa).

ATP is bound by residues 10–18 (AYSGGLDTS) and Ala37. Positions 90 and 95 each coordinate L-citrulline. Position 120 (Gly120) interacts with ATP. Positions 122, 126, and 127 each coordinate L-aspartate. Asn126 contributes to the L-citrulline binding site. 5 residues coordinate L-citrulline: Arg130, Ser181, Ser190, Glu266, and Tyr278.

Belongs to the argininosuccinate synthase family. Type 1 subfamily. In terms of assembly, homotetramer.

It localises to the cytoplasm. The enzyme catalyses L-citrulline + L-aspartate + ATP = 2-(N(omega)-L-arginino)succinate + AMP + diphosphate + H(+). The protein operates within amino-acid biosynthesis; L-arginine biosynthesis; L-arginine from L-ornithine and carbamoyl phosphate: step 2/3. The polypeptide is Argininosuccinate synthase (Laribacter hongkongensis (strain HLHK9)).